A 401-amino-acid chain; its full sequence is Argininosuccinate synthase (401 aa).

Position 9–17 (9–17 (AYSGGLDTS)) interacts with ATP. Position 86 (Y86) interacts with L-citrulline. G116 lines the ATP pocket. L-aspartate is bound by residues T118, N122, and D123. Position 122 (N122) interacts with L-citrulline. L-citrulline contacts are provided by R126, S174, S183, E259, and Y271.

It belongs to the argininosuccinate synthase family. Type 1 subfamily. In terms of assembly, homotetramer.

Its subcellular location is the cytoplasm. The catalysed reaction is L-citrulline + L-aspartate + ATP = 2-(N(omega)-L-arginino)succinate + AMP + diphosphate + H(+). Its pathway is amino-acid biosynthesis; L-arginine biosynthesis; L-arginine from L-ornithine and carbamoyl phosphate: step 2/3. This Bacillus cereus (strain Q1) protein is Argininosuccinate synthase.